The following is a 650-amino-acid chain: Phosphatidylinositol 4-kinase gamma 7 (650 aa).

The Ubiquitin-like; degenerate domain occupies 46–103; the sequence is RRVFVQTETGCVLGMELDRSDNVHTVKRRLQIALNFPTEESSLTYGDMVLTNDLSAVR. Residues 166 to 463 form the PI3K/PI4K catalytic domain; sequence GVEPLPVHSG…SVTERDVFSP (298 aa). The segment at 172–178 is G-loop; that stretch reads VHSGLGG. Residues 173–179, lysine 194, and 283–286 contribute to the ATP site; these read HSGLGGA and QKFV. A catalytic loop region spans residues 316–324; it reads FNTDRHGGN. The tract at residues 343–369 is activation loop; it reads PIDHGLCLPETLEDPYFEWIHWPQASL. An ATP-binding site is contributed by aspartate 345. 2 disordered regions span residues 508–534 and 560–595; these read SLGK…ENTV and STSM…KSAN. Positions 516–529 are enriched in acidic residues; sequence IKEEEEDEEEEEDK. 2 stretches are compositionally biased toward polar residues: residues 560 to 569 and 585 to 595; these read STSMKNTHLS and ENTSSGHKSAN. At serine 593 the chain carries Phosphoserine.

The protein belongs to the PI3/PI4-kinase family. Type II PI4K subfamily.

It carries out the reaction a 1,2-diacyl-sn-glycero-3-phospho-(1D-myo-inositol) + ATP = a 1,2-diacyl-sn-glycero-3-phospho-(1D-myo-inositol 4-phosphate) + ADP + H(+). The phosphorylation of phosphatidylinositol (PI) to PI4P is the first committed step in the generation of phosphatidylinositol 4,5-bisphosphate (PIP2), a precursor of the second messenger inositol 1,4,5-trisphosphate (InsP3). Undergoes autophosphorylation and phosphorylates serine/threonine residues of protein substrates. This is Phosphatidylinositol 4-kinase gamma 7 from Arabidopsis thaliana (Mouse-ear cress).